A 170-amino-acid polypeptide reads, in one-letter code: Cathelicidin antimicrobial peptide (170 aa).

An N-terminal signal peptide occupies residues 1-30 (MKTQRHGPSLGRWSLVLLLLGLVMPLAIVA). The propeptide at 31 to 131 (QVLSYQEAVL…DISCDKDNRR (101 aa)) is cathelin-like domain (CLD). Intrachain disulfides connect Cys86–Cys97 and Cys108–Cys125. Positions 150-162 (LKKIGQKIKDFWG) are active core.

It belongs to the cathelicidin family. As to quaternary structure, monomer, homodimer or homotrimer (in vitro). Oligomerizes as tetra- or hexamer in solution (in vitro). In terms of processing, proteolytically cleaved by proteinase PRTN3 into antibacterial peptide LL-37. Proteolytically cleaved by cathepsin CTSG and neutrophil elastase ELANE. Post-translationally, resistant to proteolytic degradation in solution, and when bound to both zwitterionic (mimicking mammalian membranes) and negatively charged membranes (mimicking bacterial membranes). After secretion onto the skin surface, the CAMP gene product is processed by a serine protease-dependent mechanism into multiple novel antimicrobial peptides distinct from and shorter than cathelicidin LL-37. These peptides show enhanced antimicrobial action, acquiring the ability to kill skin pathogens such as S.aureus, E.coli and C.albicans. These peptides have lost the ability to stimulate CXCL8/IL8 release from keratinocytes. The peptides act synergistically, killing bacteria at lower concentrations when present together, and maintain activity at increased salt condition.

Its subcellular location is the secreted. It is found in the vesicle. Antimicrobial protein that is an integral component of the innate immune system. Binds to bacterial lipopolysaccharides (LPS). Acts via neutrophil N-formyl peptide receptors to enhance the release of CXCL2. Postsecretory processing generates multiple cathelicidin antimicrobial peptides with various lengths which act as a topical antimicrobial defense in sweat on skin. The unprocessed precursor form, cathelicidin antimicrobial peptide, inhibits the growth of Gram-negative E.coli and E.aerogenes with efficiencies comparable to that of the mature peptide LL-37 (in vitro). Functionally, antimicrobial peptide that is an integral component of the innate immune system. Binds to bacterial lipopolysaccharides (LPS). Causes membrane permeabilization by forming transmembrane pores (in vitro). Causes lysis of E.coli. Exhibits antimicrobial activity against Gram-negative bacteria such as P.aeruginosa, S.typhimurium, E.aerogenes, E.coli and P.syringae, Gram-positive bacteria such as L.monocytogenes, S.epidermidis, S.pyogenes and S.aureus, as well as vancomycin-resistant enterococci (in vitro). Exhibits antimicrobial activity against methicillin-resistant S.aureus, P.mirabilis, and C.albicans in low-salt media, but not in media containing 100 mM NaCl (in vitro). Forms chiral supramolecular assemblies with quinolone signal (PQS) molecules of P.aeruginosa, which may lead to interference of bacterial quorum signaling and perturbance of bacterial biofilm formation. May form supramolecular fiber-like assemblies on bacterial membranes. Induces cytokine and chemokine producation as well as TNF/TNFA and CSF2/GMCSF production in normal human keratinocytes. Exhibits hemolytic activity against red blood cells. Its function is as follows. Exhibits antimicrobial activity against E.coli and B.megaterium (in vitro). The chain is Cathelicidin antimicrobial peptide from Trachypithecus cristatus (Silvered leaf-monkey).